The primary structure comprises 323 residues: MQELRFVLIVVGALAIAALLFHGLWTSKKEGKAKFGNKPLGKLDVDQEDKDTPGQERDFAPDPEDDFEIIRKDRKEPDFGMENSFDNKFSSDPLIDDVLEAKEDKEQREEQEIPAFVATKTDDEQVEPVLQEPAKAFAEKEEAAEVVEETLQPVFEAPLAAQAPEVEVAPVVVDPVVEEPKPEPEMQVIVLNVHCAGDEPFVGTQLFDSMQQNGLIYGEMNIFHRHVDLSGNGKVLFSVANMMQPGTLEHGDPAEFSTKGISFFMTLPCYGEADQNFNLMLRIAQQIADDMGGNVLDDQRNLMTPDRLASYRRQIVEFNAANA.

The Periplasmic portion of the chain corresponds to 1-5 (MQELR). A helical transmembrane segment spans residues 6–26 (FVLIVVGALAIAALLFHGLWT). The Cytoplasmic portion of the chain corresponds to 27–323 (SKKEGKAKFG…QIVEFNAANA (297 aa)). Positions 35-92 (FGNKPLGKLDVDQEDKDTPGQERDFAPDPEDDFEIIRKDRKEPDFGMENSFDNKFSSD) are disordered. 2 stretches are compositionally biased toward basic and acidic residues: residues 41–60 (GKLD…RDFA) and 68–78 (EIIRKDRKEPD).

Belongs to the ZipA family. As to quaternary structure, interacts with FtsZ via their C-terminal domains.

Its subcellular location is the cell inner membrane. Essential cell division protein that stabilizes the FtsZ protofilaments by cross-linking them and that serves as a cytoplasmic membrane anchor for the Z ring. Also required for the recruitment to the septal ring of downstream cell division proteins. This chain is Cell division protein ZipA, found in Vibrio campbellii (strain ATCC BAA-1116).